The sequence spans 240 residues: Endonuclease NBR9 (240 aa).

The interval 1-24 (MKGTGGVVVGTQNPVRDYNHSTDE) is disordered. One can recognise a Smr domain in the interval 97–173 (IDLHGLYVKE…NSGVLVLELQ (77 aa)). The disordered stretch occupies residues 181-219 (GPAVNAPTNQYNAQPHPQYNNNGGQPQGQAQNYNNSGND). A compositionally biased stretch (low complexity) spans 194–215 (QPHPQYNNNGGQPQGQAQNYNN).

The protein resides in the cytoplasm. Endonuclease involved in nonstop mRNA decay via the formation of mRNA cleavage fragments in the vicinity of stalled ribosomes. The chain is Endonuclease NBR9 from Saccharomyces cerevisiae (strain ATCC 204508 / S288c) (Baker's yeast).